Consider the following 203-residue polypeptide: Urease accessory protein UreG (203 aa).

Residue 11–18 (GPVGSGKT) coordinates GTP.

Belongs to the SIMIBI class G3E GTPase family. UreG subfamily. In terms of assembly, homodimer. UreD, UreF and UreG form a complex that acts as a GTP-hydrolysis-dependent molecular chaperone, activating the urease apoprotein by helping to assemble the nickel containing metallocenter of UreC. The UreE protein probably delivers the nickel.

The protein localises to the cytoplasm. Facilitates the functional incorporation of the urease nickel metallocenter. This process requires GTP hydrolysis, probably effectuated by UreG. This is Urease accessory protein UreG from Prochlorococcus marinus (strain MIT 9301).